Reading from the N-terminus, the 341-residue chain is Tetraacyldisaccharide 4'-kinase (341 aa).

54–61 (TVGGAGKT) is a binding site for ATP.

Belongs to the LpxK family.

The catalysed reaction is a lipid A disaccharide + ATP = a lipid IVA + ADP + H(+). Its pathway is glycolipid biosynthesis; lipid IV(A) biosynthesis; lipid IV(A) from (3R)-3-hydroxytetradecanoyl-[acyl-carrier-protein] and UDP-N-acetyl-alpha-D-glucosamine: step 6/6. In terms of biological role, transfers the gamma-phosphate of ATP to the 4'-position of a tetraacyldisaccharide 1-phosphate intermediate (termed DS-1-P) to form tetraacyldisaccharide 1,4'-bis-phosphate (lipid IVA). The protein is Tetraacyldisaccharide 4'-kinase of Brucella anthropi (strain ATCC 49188 / DSM 6882 / CCUG 24695 / JCM 21032 / LMG 3331 / NBRC 15819 / NCTC 12168 / Alc 37) (Ochrobactrum anthropi).